Consider the following 137-residue polypeptide: Glutamate mutase sigma subunit (137 aa).

The region spanning 3 to 137 (KKTIVLGVIG…ADMKEVLGVE (135 aa)) is the B12-binding domain. Residues 13–17 (SDCHA), H16, 61–63 (SSL), and 93–97 (NIVVG) contribute to the adenosylcob(III)alamin site.

Belongs to the methylaspartate mutase GlmS subunit family. Heterotetramer composed of 2 epsilon subunits (GlmE) and 2 sigma subunits (GlmS). GlmE exists as a homodimer and GlmS as a monomer. Requires adenosylcob(III)alamin as cofactor.

It catalyses the reaction (2S,3S)-3-methyl-L-aspartate = L-glutamate. It participates in amino-acid degradation; L-glutamate degradation via mesaconate pathway; acetate and pyruvate from L-glutamate: step 1/4. Its function is as follows. Catalyzes the carbon skeleton rearrangement of L-glutamate to L-threo-3-methylaspartate ((2S,3S)-3-methylaspartate). The polypeptide is Glutamate mutase sigma subunit (Clostridium tetanomorphum).